The sequence spans 70 residues: DNA-directed RNA polymerase subunit omega (70 aa).

The protein belongs to the RNA polymerase subunit omega family. As to quaternary structure, the RNAP catalytic core consists of 2 alpha, 1 beta, 1 beta' and 1 omega subunit. When a sigma factor is associated with the core the holoenzyme is formed, which can initiate transcription.

It carries out the reaction RNA(n) + a ribonucleoside 5'-triphosphate = RNA(n+1) + diphosphate. Promotes RNA polymerase assembly. Latches the N- and C-terminal regions of the beta' subunit thereby facilitating its interaction with the beta and alpha subunits. The polypeptide is DNA-directed RNA polymerase subunit omega (Bacillus cytotoxicus (strain DSM 22905 / CIP 110041 / 391-98 / NVH 391-98)).